A 146-amino-acid chain; its full sequence is Single-stranded DNA-binding protein, mitochondrial (146 aa).

A mitochondrion-targeting transit peptide spans Met-1–Gly-22. Residues Val-38–Arg-142 enclose the SSB domain.

In terms of assembly, homotetramer. In terms of tissue distribution, uniformly distributed in the early embryo. High levels detected in the anterior and posterior midgut primordia of stage 12 embryos. In larvae, high levels were detected in proliferating tissues including the CNS and digestive tract. In adults, highly expressed in the CNS, digestive tract and ovary.

The protein resides in the mitochondrion. Functionally, binds preferentially and cooperatively to pyrimidine rich single-stranded DNA (ss-DNA). Required to maintain the copy number of mitochondrial DNA (mtDNA) and plays crucial roles during mtDNA replication that stimulate activity of the gamma complex polymerase PolG1/tam at the replication fork. Promotes PolG1 activity largely by organizing the template DNA and eliminating secondary structures to favor ss-DNA conformations that facilitate PolG1 activity. This Drosophila melanogaster (Fruit fly) protein is Single-stranded DNA-binding protein, mitochondrial (mtSSB).